A 247-amino-acid polypeptide reads, in one-letter code: Carboxy-S-adenosyl-L-methionine synthase (247 aa).

S-adenosyl-L-methionine is bound by residues Y40, G65–S67, D90–N91, D122–I123, N137, and R204.

It belongs to the class I-like SAM-binding methyltransferase superfamily. Cx-SAM synthase family. In terms of assembly, homodimer.

The enzyme catalyses prephenate + S-adenosyl-L-methionine = carboxy-S-adenosyl-L-methionine + 3-phenylpyruvate + H2O. Its function is as follows. Catalyzes the conversion of S-adenosyl-L-methionine (SAM) to carboxy-S-adenosyl-L-methionine (Cx-SAM). The polypeptide is Carboxy-S-adenosyl-L-methionine synthase (Pseudomonas savastanoi pv. phaseolicola (strain 1448A / Race 6) (Pseudomonas syringae pv. phaseolicola (strain 1448A / Race 6))).